The following is a 419-amino-acid chain: Glutamate dehydrogenase (419 aa).

Residue Lys105 is part of the active site. 219 to 225 (GYGNAGY) lines the NAD(+) pocket.

It belongs to the Glu/Leu/Phe/Val dehydrogenases family. Homohexamer.

The protein localises to the cytoplasm. It carries out the reaction L-glutamate + NAD(+) + H2O = 2-oxoglutarate + NH4(+) + NADH + H(+). The catalysed reaction is L-glutamate + NADP(+) + H2O = 2-oxoglutarate + NH4(+) + NADPH + H(+). This is Glutamate dehydrogenase (gdhA) from Thermococcus litoralis (strain ATCC 51850 / DSM 5473 / JCM 8560 / NS-C).